The following is a 379-amino-acid chain: Gonadotropin-releasing hormone II receptor (379 aa).

Residues 1 to 45 are Extracellular-facing; that stretch reads MSGNTTLLLSNPTNVLDNSSVLNVSVSPPVLKWETPTFTTAARFR. Residues asparagine 4, asparagine 18, and asparagine 23 are each glycosylated (N-linked (GlcNAc...) asparagine). The helical transmembrane segment at 46–65 threads the bilayer; that stretch reads VAATLVLFVFAAASNLSVLL. The Cytoplasmic portion of the chain corresponds to 66–80; sequence SVTRGRGRRLASHLR. A helical membrane pass occupies residues 81–100; that stretch reads PLIASLASADLVMTFVVMPL. The Extracellular portion of the chain corresponds to 101–118; that stretch reads DAVWNVTVQWYAGDAMCK. Asparagine 105 carries an N-linked (GlcNAc...) asparagine glycan. Cysteine 117 and cysteine 194 form a disulfide bridge. A helical membrane pass occupies residues 119–140; it reads LMCFLKLFAMHSAAFILVVVSL. Residues 141–167 are Cytoplasmic-facing; the sequence is DRHHAILHPLDTLDAGRRNRRMLLTAW. A helical membrane pass occupies residues 168–184; the sequence is ILSLLLASPQLFIFRAI. Residues 185–210 lie on the Extracellular side of the membrane; the sequence is KAKGVDFVQCATHGSFQQHWQETAYN. A helical membrane pass occupies residues 211–230; that stretch reads MFHFVTLYVFPLLVMSLCYT. Over 231 to 283 the chain is Cytoplasmic; the sequence is RILVEINRQMHRSKDKAGEPCLRRSGTDMIPKARMKTLKMTIIIVASFVICWT. Residues 284-302 traverse the membrane as a helical segment; that stretch reads PYYLLGIWYWFQPQMLHVI. The Extracellular portion of the chain corresponds to 303–308; it reads PDYVHH. Residues 309–328 form a helical membrane-spanning segment; the sequence is VFFVFGNLNTCCDPVIYGFF. Residues 329–379 lie on the Cytoplasmic side of the membrane; that stretch reads TPSFRADLSRCFCWRNQNASAKSLPHFSGHRREVSGEAESDLGSGDQPSGQ. A disordered region spans residues 355–379; that stretch reads FSGHRREVSGEAESDLGSGDQPSGQ.

The protein belongs to the G-protein coupled receptor 1 family. Post-translationally, phosphorylated on the C-terminal cytoplasmic tail.

The protein localises to the cell membrane. Receptor for gonadotropin releasing hormone II (GnRH II). This receptor mediates its action by association with G proteins that activate a phosphatidylinositol-calcium second messenger system. The protein is Gonadotropin-releasing hormone II receptor of Clarias gariepinus (North African catfish).